We begin with the raw amino-acid sequence, 131 residues long: D-ribose pyranase (131 aa).

His-20 (proton donor) is an active-site residue. Substrate-binding positions include Asp-28, His-98, and 120 to 122; that span reads YAN.

This sequence belongs to the RbsD / FucU family. RbsD subfamily. In terms of assembly, homodecamer.

It localises to the cytoplasm. The enzyme catalyses beta-D-ribopyranose = beta-D-ribofuranose. The protein operates within carbohydrate metabolism; D-ribose degradation; D-ribose 5-phosphate from beta-D-ribopyranose: step 1/2. Catalyzes the interconversion of beta-pyran and beta-furan forms of D-ribose. In Bacillus anthracis (strain A0248), this protein is D-ribose pyranase.